Consider the following 313-residue polypeptide: ADP-L-glycero-D-manno-heptose-6-epimerase (313 aa).

NADP(+) is bound by residues 10-11, 31-32, K38, R53, 75-79, and N92; these read MI, DN, and EGACS. The Proton acceptor role is filled by Y139. K143 is a binding site for NADP(+). N174 contributes to the substrate binding site. Residues V175 and K183 each coordinate NADP(+). Catalysis depends on K183, which acts as the Proton acceptor. Residues S185, H192, 206 to 209, R214, and Y277 each bind substrate; that span reads FAGS.

Belongs to the NAD(P)-dependent epimerase/dehydratase family. HldD subfamily. As to quaternary structure, homopentamer. NADP(+) serves as cofactor.

The catalysed reaction is ADP-D-glycero-beta-D-manno-heptose = ADP-L-glycero-beta-D-manno-heptose. It participates in nucleotide-sugar biosynthesis; ADP-L-glycero-beta-D-manno-heptose biosynthesis; ADP-L-glycero-beta-D-manno-heptose from D-glycero-beta-D-manno-heptose 7-phosphate: step 4/4. In terms of biological role, catalyzes the interconversion between ADP-D-glycero-beta-D-manno-heptose and ADP-L-glycero-beta-D-manno-heptose via an epimerization at carbon 6 of the heptose. The protein is ADP-L-glycero-D-manno-heptose-6-epimerase of Vibrio campbellii (strain ATCC BAA-1116).